The primary structure comprises 134 residues: Small ribosomal subunit protein bS6 (134 aa).

Positions 99–134 (PSQLAKSADEKRARKAPRSENFDNDQDDESNDDSDE) are disordered. Residues 105–119 (SADEKRARKAPRSEN) are compositionally biased toward basic and acidic residues. Over residues 120–134 (FDNDQDDESNDDSDE) the composition is skewed to acidic residues.

It belongs to the bacterial ribosomal protein bS6 family.

Binds together with bS18 to 16S ribosomal RNA. The sequence is that of Small ribosomal subunit protein bS6 from Psychrobacter sp. (strain PRwf-1).